We begin with the raw amino-acid sequence, 133 residues long: Probable nuclear transport factor 2 (133 aa).

Positions 10-128 (VAKAFIQHYY…YFIGNEIFRL (119 aa)) constitute an NTF2 domain.

The protein resides in the cytoplasm. Its function is as follows. Facilitates protein transport into the nucleus. Could be part of a multicomponent system of cytosolic factors that assemble at the pore complex during nuclear import. The polypeptide is Probable nuclear transport factor 2 (ran-4) (Caenorhabditis elegans).